Here is a 147-residue protein sequence, read N- to C-terminus: Globin (147 aa).

Residues 1–147 enclose the Globin domain; it reads GLDGAQKTAL…LLTMLIKAHV (147 aa). The heme b site is built by His66 and His98.

It belongs to the globin family. As to quaternary structure, homodimer.

Its subcellular location is the cytoplasm. This chain is Globin, found in Busycotypus canaliculatus (Channeled whelk).